The sequence spans 898 residues: Serine/threonine-protein kinase TAO3 (898 aa).

The Protein kinase domain maps to 24–277 (FVGLHEIGHG…SADLLRHDFV (254 aa)). ATP contacts are provided by residues 30–38 (IGHGSFGAV) and K53. The active-site Proton acceptor is D147. The interval 316-374 (TRNGPLTESQEEEEDSEHGSNLSRKMDSLGSNHSIPSMSVSTGSQSSSVSSMQEVLDES) is disordered. Over residues 334–351 (GSNLSRKMDSLGSNHSIP) the composition is skewed to polar residues. Positions 352-368 (SMSVSTGSQSSSVSSMQ) are enriched in low complexity. Coiled coils occupy residues 452–502 (EQEN…THAN), 548–649 (FLES…HAML), and 754–875 (LKSL…IETF). A disordered region spans residues 565–596 (EEMNEDHSTPKKEKQERISKHKENLQHTQAEE).

Belongs to the protein kinase superfamily. STE Ser/Thr protein kinase family. STE20 subfamily.

The protein localises to the cytoplasm. The protein resides in the cell membrane. It localises to the membrane raft. It is found in the lipid droplet. It carries out the reaction L-seryl-[protein] + ATP = O-phospho-L-seryl-[protein] + ADP + H(+). It catalyses the reaction L-threonyl-[protein] + ATP = O-phospho-L-threonyl-[protein] + ADP + H(+). Serine/threonine-protein kinase that acts as a regulator of the p38/MAPK14 stress-activated MAPK cascade and of the MAPK8/JNK cascade. In response to DNA damage, involved in the G2/M transition DNA damage checkpoint by activating the p38/MAPK14 stress-activated MAPK cascade, probably by mediating phosphorylation of upstream MAP kinase kinases. Inhibits basal activity of the MAPK8/JNK cascade. This chain is Serine/threonine-protein kinase TAO3 (TAOK3), found in Gallus gallus (Chicken).